The following is a 287-amino-acid chain: Glutamate racemase (287 aa).

Residues 32–33 (DS) and 64–65 (YG) each bind substrate. Cysteine 96 (proton donor/acceptor) is an active-site residue. 97–98 (NT) serves as a coordination point for substrate. The active-site Proton donor/acceptor is cysteine 208. 209–210 (TH) serves as a coordination point for substrate.

This sequence belongs to the aspartate/glutamate racemases family.

The enzyme catalyses L-glutamate = D-glutamate. It functions in the pathway cell wall biogenesis; peptidoglycan biosynthesis. In terms of biological role, provides the (R)-glutamate required for cell wall biosynthesis. The sequence is that of Glutamate racemase from Photorhabdus laumondii subsp. laumondii (strain DSM 15139 / CIP 105565 / TT01) (Photorhabdus luminescens subsp. laumondii).